Consider the following 127-residue polypeptide: Interacting with cytoskeleton protein 1 (127 aa).

Its subcellular location is the vacuole membrane. In terms of biological role, required for viability of cells lacking mtDNA. The chain is Interacting with cytoskeleton protein 1 (ICY1) from Saccharomyces cerevisiae (strain ATCC 204508 / S288c) (Baker's yeast).